Reading from the N-terminus, the 548-residue chain is Chaperonin GroEL (548 aa).

ATP contacts are provided by residues threonine 30 to proline 33, lysine 51, aspartate 87 to threonine 91, glycine 415, asparagine 479 to alanine 481, and aspartate 495. The interval leucine 524 to methionine 548 is disordered. Positions glycine 539–methionine 548 are enriched in gly residues.

This sequence belongs to the chaperonin (HSP60) family. As to quaternary structure, forms a cylinder of 14 subunits composed of two heptameric rings stacked back-to-back. Interacts with the co-chaperonin GroES.

The protein resides in the cytoplasm. The catalysed reaction is ATP + H2O + a folded polypeptide = ADP + phosphate + an unfolded polypeptide.. Together with its co-chaperonin GroES, plays an essential role in assisting protein folding. The GroEL-GroES system forms a nano-cage that allows encapsulation of the non-native substrate proteins and provides a physical environment optimized to promote and accelerate protein folding. The chain is Chaperonin GroEL from Buchnera aphidicola subsp. Acyrthosiphon pisum (strain 5A).